A 379-amino-acid polypeptide reads, in one-letter code: Demethylspheroidene O-methyltransferase (379 aa).

S-adenosyl-L-methionine-binding residues include Asp235 and Arg279.

It belongs to the class I-like SAM-binding methyltransferase superfamily. Cation-independent O-methyltransferase family.

The enzyme catalyses demethylspheroidene + S-adenosyl-L-methionine = spheroidene + S-adenosyl-L-homocysteine + H(+). Its pathway is carotenoid biosynthesis; spheroidene biosynthesis. Methyltransferase that mediates the O-methylation of 1-hydroxy carotenoids. Converts hydroxyneurosporene to methoxyneurosporene or demethylspheroidene to spheroidene. Also able to produce spirilloxanthin. The chain is Demethylspheroidene O-methyltransferase (crtF) from Cereibacter sphaeroides (strain ATCC 17023 / DSM 158 / JCM 6121 / CCUG 31486 / LMG 2827 / NBRC 12203 / NCIMB 8253 / ATH 2.4.1.) (Rhodobacter sphaeroides).